A 158-amino-acid polypeptide reads, in one-letter code: Transcription elongation factor GreA (158 aa).

Residues 1 to 67 are a coiled coil; that stretch reads MSNNIPLTKE…FIEGRIQELQ (67 aa).

This sequence belongs to the GreA/GreB family.

In terms of biological role, necessary for efficient RNA polymerase transcription elongation past template-encoded arresting sites. The arresting sites in DNA have the property of trapping a certain fraction of elongating RNA polymerases that pass through, resulting in locked ternary complexes. Cleavage of the nascent transcript by cleavage factors such as GreA or GreB allows the resumption of elongation from the new 3'terminus. GreA releases sequences of 2 to 3 nucleotides. This Trichlorobacter lovleyi (strain ATCC BAA-1151 / DSM 17278 / SZ) (Geobacter lovleyi) protein is Transcription elongation factor GreA.